Consider the following 165-residue polypeptide: Lipoprotein signal peptidase (165 aa).

The next 4 helical transmembrane spans lie at 11–31, 41–61, 64–84, and 92–112; these read YWVL…AVLS, VIPS…FSFL, QGGW…AYLV, and FATL…GNVI. Residues Asp-122 and Asp-140 contribute to the active site. The helical transmembrane segment at 132–152 threads the bilayer; the sequence is FYPAFNIADSFICVGAVLAVL.

This sequence belongs to the peptidase A8 family.

The protein localises to the cell inner membrane. The catalysed reaction is Release of signal peptides from bacterial membrane prolipoproteins. Hydrolyzes -Xaa-Yaa-Zaa-|-(S,diacylglyceryl)Cys-, in which Xaa is hydrophobic (preferably Leu), and Yaa (Ala or Ser) and Zaa (Gly or Ala) have small, neutral side chains.. The protein operates within protein modification; lipoprotein biosynthesis (signal peptide cleavage). This protein specifically catalyzes the removal of signal peptides from prolipoproteins. This chain is Lipoprotein signal peptidase, found in Neisseria meningitidis serogroup A / serotype 4A (strain DSM 15465 / Z2491).